The sequence spans 188 residues: Elongation factor P-like protein (188 aa).

The protein belongs to the elongation factor P family.

The protein is Elongation factor P-like protein of Xanthomonas oryzae pv. oryzae (strain MAFF 311018).